The chain runs to 442 residues: O-methyltransferase pgmB (442 aa).

Asp-291 is an S-adenosyl-L-methionine binding site. The active-site Proton acceptor is the His-341.

This sequence belongs to the class I-like SAM-binding methyltransferase superfamily. Cation-independent O-methyltransferase family.

Its pathway is pigment biosynthesis. It functions in the pathway secondary metabolite biosynthesis. Its function is as follows. O-methyltransferase; part of the gene cluster that mediates the biosynthesis of pleosporalin A, ascomycone A, as well as a third cryptic naphthoquinone derived pigment, all responsible for the coloration of conidia. Specifically methylates position C-6 of the pgmA product 3-acetonyl-1,6,8-trihydroxy-2-naphthaldehyde to yield fusarubinaldehyde. The pathway begins with the biosynthesis of the cyclized heptaketide 3-acetonyl-1,6,8-trihydroxy-2-naphthaldehyde by the NR-PKS pgmA. The C-6 hydroxyl group is further methylated by the O-methyltransferase pgmB to yield fusarubinaldehyde which is in turn oxidized by the cytochrome P450 monooxygenase pgmC at C-9. The C-1 hydroxyl group is then methylated spontaneously. Although pgmE, pgmD and pgmH are essential for the production of pleosporalin A, it is not the case for the 2 other final products and it remains difficult to assign a specific function to each enzyme. PgmF and pgmG seem not to be involved in pigment biosynthesis although they were regulated by the cluster-specific transcription factor pgmR. In Aspergillus terreus, this protein is O-methyltransferase pgmB.